We begin with the raw amino-acid sequence, 115 residues long: Small ribosomal subunit protein bS6 (115 aa).

It belongs to the bacterial ribosomal protein bS6 family.

Binds together with bS18 to 16S ribosomal RNA. This is Small ribosomal subunit protein bS6 from Picosynechococcus sp. (strain ATCC 27264 / PCC 7002 / PR-6) (Agmenellum quadruplicatum).